Consider the following 156-residue polypeptide: Cell division protein SepF (156 aa).

Belongs to the SepF family. As to quaternary structure, homodimer. Interacts with FtsZ.

The protein localises to the cytoplasm. Its function is as follows. Cell division protein that is part of the divisome complex and is recruited early to the Z-ring. Probably stimulates Z-ring formation, perhaps through the cross-linking of FtsZ protofilaments. Its function overlaps with FtsA. This chain is Cell division protein SepF, found in Bacillus cytotoxicus (strain DSM 22905 / CIP 110041 / 391-98 / NVH 391-98).